Reading from the N-terminus, the 99-residue chain is Integration host factor subunit alpha (99 aa).

It belongs to the bacterial histone-like protein family. In terms of assembly, heterodimer of an alpha and a beta chain.

This protein is one of the two subunits of integration host factor, a specific DNA-binding protein that functions in genetic recombination as well as in transcriptional and translational control. The sequence is that of Integration host factor subunit alpha from Nitrosococcus oceani (strain ATCC 19707 / BCRC 17464 / JCM 30415 / NCIMB 11848 / C-107).